Here is a 316-residue protein sequence, read N- to C-terminus: Transcription initiation factor IIB (316 aa).

Residues 7–38 (FRLRCPVCGSTDIVFNEETGEYVCARCGTIVL) form a TFIIB-type zinc finger. 4 residues coordinate Zn(2+): Cys11, Cys14, Cys30, and Cys33. The tract at residues 51-73 (FTPEERERRGRTGAPLSPTLHDH) is disordered. 2 tandem repeats follow at residues 124–207 (NELD…TKEL) and 218–299 (DHIP…EIMK).

The protein belongs to the TFIIB family.

In terms of biological role, stabilizes TBP binding to an archaeal box-A promoter. Also responsible for recruiting RNA polymerase II to the pre-initiation complex (DNA-TBP-TFIIB). The sequence is that of Transcription initiation factor IIB from Ignicoccus hospitalis (strain KIN4/I / DSM 18386 / JCM 14125).